The sequence spans 501 residues: ATP synthase subunit alpha (501 aa).

Residue 169-176 (GDRQTGKT) coordinates ATP.

The protein belongs to the ATPase alpha/beta chains family. As to quaternary structure, F-type ATPases have 2 components, CF(1) - the catalytic core - and CF(0) - the membrane proton channel. CF(1) has five subunits: alpha(3), beta(3), gamma(1), delta(1), epsilon(1). CF(0) has three main subunits: a(1), b(2) and c(9-12). The alpha and beta chains form an alternating ring which encloses part of the gamma chain. CF(1) is attached to CF(0) by a central stalk formed by the gamma and epsilon chains, while a peripheral stalk is formed by the delta and b chains.

It is found in the cell inner membrane. It carries out the reaction ATP + H2O + 4 H(+)(in) = ADP + phosphate + 5 H(+)(out). Its function is as follows. Produces ATP from ADP in the presence of a proton gradient across the membrane. The alpha chain is a regulatory subunit. This is ATP synthase subunit alpha from Campylobacter jejuni subsp. doylei (strain ATCC BAA-1458 / RM4099 / 269.97).